Here is a 257-residue protein sequence, read N- to C-terminus: Protein IMPACT homolog (257 aa).

Residues 9-102 enclose the RWD domain; it reads AEIESLASIF…SLVQDFIRDL (94 aa).

The protein belongs to the IMPACT family. In terms of assembly, interacts with gcn-1; prevents the interaction of gcn-1 with gcn-2 and inhibits gcn-2 kinase activity. Interaction with rpl-39; this interaction occurs in a gcn-1-independent manner. Associates with ribosomes; this interaction occurs in a gcn-1-independent manner. Associates with actin; this interaction occurs in a gcn-1-independent manner.

It localises to the cytoplasm. Functionally, translational regulator that ensures constant high levels of translation under amino acid starvation. Plays a role as a negative regulator of the gcn-2 kinase activity; impairs gcn-1-mediated gcn-2 activation, and hence gcn-2-mediated eIF-2-alpha phosphorylation and subsequent down-regulation of protein synthesis in amino acid-starved cells. Plays a role in differentiation of neuronal cells by stimulating neurite outgrowth. The chain is Protein IMPACT homolog from Caenorhabditis elegans.